Consider the following 133-residue polypeptide: Large ribosomal subunit protein uL22 (133 aa).

This sequence belongs to the universal ribosomal protein uL22 family. In terms of assembly, part of the 50S ribosomal subunit.

In terms of biological role, this protein binds specifically to 23S rRNA; its binding is stimulated by other ribosomal proteins, e.g. L4, L17, and L20. It is important during the early stages of 50S assembly. It makes multiple contacts with different domains of the 23S rRNA in the assembled 50S subunit and ribosome. The globular domain of the protein is located near the polypeptide exit tunnel on the outside of the subunit, while an extended beta-hairpin is found that lines the wall of the exit tunnel in the center of the 70S ribosome. This is Large ribosomal subunit protein uL22 from Borrelia garinii subsp. bavariensis (strain ATCC BAA-2496 / DSM 23469 / PBi) (Borreliella bavariensis).